The chain runs to 177 residues: Large ribosomal subunit protein uL6 (177 aa).

Residues 154 to 177 (PEPYKGKGVRYADEQVRRKEAKKK) form a disordered region. The segment covering 155 to 171 (EPYKGKGVRYADEQVRR) has biased composition (basic and acidic residues).

The protein belongs to the universal ribosomal protein uL6 family. As to quaternary structure, part of the 50S ribosomal subunit.

In terms of biological role, this protein binds to the 23S rRNA, and is important in its secondary structure. It is located near the subunit interface in the base of the L7/L12 stalk, and near the tRNA binding site of the peptidyltransferase center. This chain is Large ribosomal subunit protein uL6, found in Alcanivorax borkumensis (strain ATCC 700651 / DSM 11573 / NCIMB 13689 / SK2).